The sequence spans 165 residues: Large ribosomal subunit protein uL22c (165 aa).

This sequence belongs to the universal ribosomal protein uL22 family. As to quaternary structure, part of the 50S ribosomal subunit.

The protein resides in the plastid. The protein localises to the chloroplast. Functionally, this protein binds specifically to 23S rRNA. Its function is as follows. The globular domain of the protein is located near the polypeptide exit tunnel on the outside of the subunit, while an extended beta-hairpin is found that lines the wall of the exit tunnel in the center of the 70S ribosome. This chain is Large ribosomal subunit protein uL22c (rpl22), found in Daucus carota (Wild carrot).